We begin with the raw amino-acid sequence, 735 residues long: MKFDNHTYIQNYTSSDDETIVLINPLILNLFNKTNYDISQSNKQKDSIYHLDINIKTNSKLDKKSKKIDRNQDEVDELAKSKTKSKKKVQVEFETDDEYLNVFNKPKHFDIVEKNIRKTEILNEIKTINSATGKKNKKLLSRKKEEIVEDNQIPKELRINSSLTVQEFAELTCISDIEIIRTLFLKGQAVTVNQILDINTIIELGKDFHINIQIEEKNGLNEVNIEKNNFIKFSENTIRRAPIVTILGHVDHGKTTLLDKIRQTQIAQKEAGGITQKIAAYKVNVQYKNENRNIVFLDTPGHEAFSNMRSRGINVTDIVILLVAADDGVKPQTIEAINAIKAAKLPIIVAINKIDKDQANIEKVQQELSKYELIPESWGGQTPMIPISASQGTNIDSLLELILLMADIENYQAIEEDLASGTILESHIDRTRGPIASILVQNGTLKLGDIIVTGTSLGKIRGMLDSEGNKINTLTPSSPGIIWGLNKSLNSGDKFQTFSNEKDAKTYFSKESENNKKITYNYISENPSNQILEESSKKILNFILKTDTQGSIEAIVNAISRIKTKQLQIKILYSNLGEVTETDVEFASTTNAFVLAFNTRLAPGAKKTARQLNIDIREYNVVYDLVEDIESLIAQHSEPEYKKLKIGAATVKAVFPLGKNFVAGIIINEGKIVRSAHIQVQRKSGLVFEGDITTIKIVKKDVEEVSEGNECGLFIEEFSEWKVGDSIEIFELIQI.

One can recognise a tr-type G domain in the interval 239 to 411 (RRAPIVTILG…ILLMADIENY (173 aa)). Residues 248 to 255 (GHVDHGKT) are G1. Residue 248–255 (GHVDHGKT) participates in GTP binding. A G2 region spans residues 273-277 (GITQK). A G3 region spans residues 298 to 301 (DTPG). GTP-binding positions include 298–302 (DTPGH) and 352–355 (NKID). The interval 352-355 (NKID) is G4. The tract at residues 388 to 390 (SAS) is G5.

It belongs to the TRAFAC class translation factor GTPase superfamily. Classic translation factor GTPase family. IF-2 subfamily.

The protein localises to the plastid. The protein resides in the chloroplast. Functionally, one of the essential components for the initiation of protein synthesis. Protects formylmethionyl-tRNA from spontaneous hydrolysis and promotes its binding to the 30S ribosomal subunits. Also involved in the hydrolysis of GTP during the formation of the 70S ribosomal complex. The polypeptide is Translation initiation factor IF-2, chloroplastic (infB) (Guillardia theta (Cryptophyte)).